The primary structure comprises 1131 residues: Activity-dependent neuroprotector homeobox protein 2 (1131 aa).

The segment at tyrosine 73 to histidine 96 adopts a C2H2-type 1 zinc-finger fold. The C2H2-type 2; degenerate zinc finger occupies isoleucine 106 to histidine 128. Residues lysine 118 and lysine 146 each participate in a glycyl lysine isopeptide (Lys-Gly) (interchain with G-Cter in SUMO2) cross-link. A C2H2-type 3; degenerate zinc finger spans residues phenylalanine 155–histidine 178. The C2H2-type 4 zinc-finger motif lies at tyrosine 215–histidine 240. Residues leucine 274–alanine 285 are compositionally biased toward low complexity. A disordered region spans residues leucine 274–serine 329. The C2H2-type 5; degenerate zinc-finger motif lies at lysine 694–histidine 716. Residues valine 747–histidine 768 form a C2H2-type 6; degenerate zinc finger. 2 C2H2-type zinc fingers span residues leucine 770 to histidine 793 and serine 875 to histidine 898. The C2H2-type 9; degenerate zinc-finger motif lies at phenylalanine 913 to arginine 937. Residues lysine 979 and lysine 1018 each participate in a glycyl lysine isopeptide (Lys-Gly) (interchain with G-Cter in SUMO2) cross-link. Phosphoserine is present on serine 1024. A Glycyl lysine isopeptide (Lys-Gly) (interchain with G-Cter in SUMO1); alternate cross-link involves residue lysine 1032. Residue lysine 1032 forms a Glycyl lysine isopeptide (Lys-Gly) (interchain with G-Cter in SUMO2); alternate linkage. A DNA-binding region (homeobox) is located at residues proline 1043 to isoleucine 1102.

It belongs to the krueppel C2H2-type zinc-finger protein family. In terms of assembly, may interact with SMARCA4/BRG1.

The protein localises to the nucleus. Its function is as follows. May be involved in transcriptional regulation. May play a role in neuronal function; perhaps involved in protection of brain tissues from oxidative stress. May be involved in erythroid differentiation. The chain is Activity-dependent neuroprotector homeobox protein 2 (ADNP2) from Homo sapiens (Human).